The following is a 445-amino-acid chain: Phosphoglucosamine mutase (445 aa).

Ser102 acts as the Phosphoserine intermediate in catalysis. Residues Ser102, Asp241, Asp243, and Asp245 each contribute to the Mg(2+) site. Ser102 carries the post-translational modification Phosphoserine.

This sequence belongs to the phosphohexose mutase family. Mg(2+) serves as cofactor. Post-translationally, activated by phosphorylation.

The catalysed reaction is alpha-D-glucosamine 1-phosphate = D-glucosamine 6-phosphate. Its function is as follows. Catalyzes the conversion of glucosamine-6-phosphate to glucosamine-1-phosphate. The protein is Phosphoglucosamine mutase of Haemophilus influenzae (strain ATCC 51907 / DSM 11121 / KW20 / Rd).